Here is a 339-residue protein sequence, read N- to C-terminus: Biotin synthase (339 aa).

A Radical SAM core domain is found at Asn-55–Arg-282. [4Fe-4S] cluster-binding residues include Cys-70, Cys-74, and Cys-77. Residues Cys-114, Cys-145, Cys-205, and Arg-277 each coordinate [2Fe-2S] cluster.

The protein belongs to the radical SAM superfamily. Biotin synthase family. As to quaternary structure, homodimer. It depends on [4Fe-4S] cluster as a cofactor. Requires [2Fe-2S] cluster as cofactor.

It carries out the reaction (4R,5S)-dethiobiotin + (sulfur carrier)-SH + 2 reduced [2Fe-2S]-[ferredoxin] + 2 S-adenosyl-L-methionine = (sulfur carrier)-H + biotin + 2 5'-deoxyadenosine + 2 L-methionine + 2 oxidized [2Fe-2S]-[ferredoxin]. The protein operates within cofactor biosynthesis; biotin biosynthesis; biotin from 7,8-diaminononanoate: step 2/2. Catalyzes the conversion of dethiobiotin (DTB) to biotin by the insertion of a sulfur atom into dethiobiotin via a radical-based mechanism. The sequence is that of Biotin synthase from Burkholderia vietnamiensis (strain G4 / LMG 22486) (Burkholderia cepacia (strain R1808)).